Here is a 403-residue protein sequence, read N- to C-terminus: MSGSDGGLEEEPELSITLTLRMLMHGKEVGSIIGKKGETVKRIREQSSARITISEGSCPERITTITGSTAAVFHAVSMIAFKLDEDLCAAPANGGNVSRPPVTLRLVIPASQCGSLIGKAGTKIKEIRETTGAQVQVAGDLLPNSTERAVTVSGVPDAIILCVRQICAVILESPPKGATIPYHPSLSLGTVLLSANQGFSVQGQYGAVTPAEVTKLQQLSSHAVPFATPSVVPGLDPGTQTSSQEFLVPNDLIGCVIGRQGSKISEIRQMSGAHIKIGNQAEGAGERHVTITGSPVSIALAQYLITACLETAKSTSGGTPSSAPADLPAPFSPPLTALPTAPPGLLGTPYAISLSNFIGLKPMPFLALPPASPGPPPGLAAYTAKMAAANGSKKAERQKFSPY.

KH domains follow at residues 17 to 67 (TLTL…TITG), 101 to 154 (PVTL…TVSG), and 241 to 293 (TSSQ…TITG).

It localises to the cytoplasm. Its function is as follows. Single-stranded nucleic acid binding protein that binds preferentially to oligo dC. This Homo sapiens (Human) protein is Poly(rC)-binding protein 4 (PCBP4).